A 354-amino-acid polypeptide reads, in one-letter code: Peptide chain release factor 1 (354 aa).

Gln230 bears the N5-methylglutamine mark.

This sequence belongs to the prokaryotic/mitochondrial release factor family. Methylated by PrmC. Methylation increases the termination efficiency of RF1.

Its subcellular location is the cytoplasm. In terms of biological role, peptide chain release factor 1 directs the termination of translation in response to the peptide chain termination codons UAG and UAA. The chain is Peptide chain release factor 1 from Thermus thermophilus (strain ATCC BAA-163 / DSM 7039 / HB27).